Here is a 351-residue protein sequence, read N- to C-terminus: UDP-3-O-acylglucosamine N-acyltransferase (351 aa).

H239 acts as the Proton acceptor in catalysis.

Belongs to the transferase hexapeptide repeat family. LpxD subfamily. As to quaternary structure, homotrimer.

The enzyme catalyses a UDP-3-O-[(3R)-3-hydroxyacyl]-alpha-D-glucosamine + a (3R)-hydroxyacyl-[ACP] = a UDP-2-N,3-O-bis[(3R)-3-hydroxyacyl]-alpha-D-glucosamine + holo-[ACP] + H(+). It participates in bacterial outer membrane biogenesis; LPS lipid A biosynthesis. Catalyzes the N-acylation of UDP-3-O-acylglucosamine using 3-hydroxyacyl-ACP as the acyl donor. Is involved in the biosynthesis of lipid A, a phosphorylated glycolipid that anchors the lipopolysaccharide to the outer membrane of the cell. The chain is UDP-3-O-acylglucosamine N-acyltransferase from Vibrio cholerae serotype O1 (strain ATCC 39315 / El Tor Inaba N16961).